A 537-amino-acid chain; its full sequence is MRRWPVDHRRRGRRRLSSWIWFLLGSFSVAGLVLFIVQHYHHQQDPSQLLLERDTRTEMVSPPHLNFTEEVTSASSFSRQLAEQMTLAKAYVFIAKEHNNLHLAWELSSKIRSCQLLLSKAAMRGQPISFDEAKPIITGLSALIYKAQDAHYDIATTMMTMKSHIQALEERANAATVQTTIFGQLVAEALPKSLHCLTIKLTSDWVTEPSRHELADENRNSPRLVDNNLYHFCIFSDNVIATSVVVNSTVSNADHPKQLVFHIVTNRVSYKAMQAWFLSNDFKGSAIEIRSVEEFSWLNASYSPVVKQLLDTDARAYYFGEQTSQDTISEPKVRNPKYLSLLNHLRFYIPEIYPQLEKIVFLDDDVVVQKDLTPLFSLDLHGNVNGAVETCLEAFHRYYKYLNFSNPLISSKFDPQACGWAFGMNVFDLIAWRNANVTARYHYWQDQNRERTLWKLGTLPPGLLSFYGLTEPLDRRWHVLGLGYDVNIDNRLIETAAVIHYNGNMKPWLKLAIGRYKPFWLKFLNSSHPYLQDCVTA.

At 1-16 the chain is on the cytoplasmic side; the sequence is MRRWPVDHRRRGRRRL. The chain crosses the membrane as a helical; Signal-anchor for type II membrane protein span at residues 17-37; the sequence is SSWIWFLLGSFSVAGLVLFIV. At 38-537 the chain is on the lumenal side; the sequence is QHYHHQQDPS…HPYLQDCVTA (500 aa). N66, N247, N299, N403, N436, and N525 each carry an N-linked (GlcNAc...) asparagine glycan.

The protein belongs to the glycosyltransferase 8 family. Monomer. As to expression, expressed in roots, inflorescences, siliques, seeds, leaves and stems.

The protein localises to the golgi apparatus membrane. The catalysed reaction is [(1-&gt;4)-alpha-D-galacturonosyl](n) + UDP-alpha-D-galacturonate = [(1-&gt;4)-alpha-D-galacturonosyl](n+1) + UDP + H(+). It functions in the pathway glycan metabolism; pectin biosynthesis. Glycosyltransferase involved in pectin and/or xylans biosynthesis in cell walls. Required for the biosynthesis of pectin in seed coat epidermal (SCE) cells. Collaboratively with MUCI70, essential for the accumulation of seed mucilage, a gelatinous wall rich in unbranched rhamnogalacturonan I (RG I), and for shaping the surface morphology of seeds. Catalyzes homogalacturonan (HG) elongation by acting as an HG alpha-1,4 galacturonic acid transferase. In Arabidopsis thaliana (Mouse-ear cress), this protein is Hexosyltransferase GAUT11.